The primary structure comprises 240 residues: UDP-2,3-diacylglucosamine hydrolase (240 aa).

Residues Asp-8, His-10, Asp-41, Asn-79, and His-114 each coordinate Mn(2+). 79 to 80 (NR) is a substrate binding site. Substrate-binding residues include Asp-122, Ser-160, Asn-164, Lys-167, and His-195. His-195 and His-197 together coordinate Mn(2+).

The protein belongs to the LpxH family. Mn(2+) is required as a cofactor.

The protein localises to the cell inner membrane. The enzyme catalyses UDP-2-N,3-O-bis[(3R)-3-hydroxytetradecanoyl]-alpha-D-glucosamine + H2O = 2-N,3-O-bis[(3R)-3-hydroxytetradecanoyl]-alpha-D-glucosaminyl 1-phosphate + UMP + 2 H(+). The protein operates within glycolipid biosynthesis; lipid IV(A) biosynthesis; lipid IV(A) from (3R)-3-hydroxytetradecanoyl-[acyl-carrier-protein] and UDP-N-acetyl-alpha-D-glucosamine: step 4/6. In terms of biological role, hydrolyzes the pyrophosphate bond of UDP-2,3-diacylglucosamine to yield 2,3-diacylglucosamine 1-phosphate (lipid X) and UMP by catalyzing the attack of water at the alpha-P atom. Involved in the biosynthesis of lipid A, a phosphorylated glycolipid that anchors the lipopolysaccharide to the outer membrane of the cell. The chain is UDP-2,3-diacylglucosamine hydrolase from Escherichia coli O17:K52:H18 (strain UMN026 / ExPEC).